Here is a 468-residue protein sequence, read N- to C-terminus: Dihydrolipoyl dehydrogenase (468 aa).

Residues 39 to 47 (EKGNLGGVC), Lys56, and Ala119 each bind FAD. An intrachain disulfide couples Cys47 to Cys52. Residues 183–187 (GGGYI), Glu206, and 271–274 (TVGR) contribute to the NAD(+) site. Positions 314 and 322 each coordinate FAD. Catalysis depends on His446, which acts as the Proton acceptor.

It belongs to the class-I pyridine nucleotide-disulfide oxidoreductase family. In terms of assembly, homodimer. FAD is required as a cofactor.

It localises to the cytoplasm. Its subcellular location is the membrane. The catalysed reaction is N(6)-[(R)-dihydrolipoyl]-L-lysyl-[protein] + NAD(+) = N(6)-[(R)-lipoyl]-L-lysyl-[protein] + NADH + H(+). In terms of biological role, lipoamide dehydrogenase is a component of the alpha-ketoacid dehydrogenase complexes. The sequence is that of Dihydrolipoyl dehydrogenase (pdhD) from Staphylococcus aureus (strain COL).